Consider the following 216-residue polypeptide: 3-keto-L-gulonate-6-phosphate decarboxylase UlaD (216 aa).

Residue D11 coordinates substrate. Positions 33 and 62 each coordinate Mg(2+). R192 contacts substrate.

The protein belongs to the HPS/KGPDC family. KGPDC subfamily. In terms of assembly, homodimer. Requires Mg(2+) as cofactor.

It carries out the reaction 3-dehydro-L-gulonate 6-phosphate + H(+) = L-xylulose 5-phosphate + CO2. It participates in cofactor degradation; L-ascorbate degradation; D-xylulose 5-phosphate from L-ascorbate: step 2/4. Catalyzes the decarboxylation of 3-keto-L-gulonate-6-P into L-xylulose-5-P. Is involved in the anaerobic L-ascorbate utilization. This is 3-keto-L-gulonate-6-phosphate decarboxylase UlaD from Salmonella choleraesuis (strain SC-B67).